A 290-amino-acid chain; its full sequence is Probable adenylate kinase 2, chloroplastic (290 aa).

The segment covering 1-10 (MASSMAATAT) has biased composition (low complexity). Positions 1-37 (MASSMAATATLSPPVLSAERPTVRGGLFLPPSPATSR) are disordered. A chloroplast-targeting transit peptide spans 1 to 61 (MASSMAATAT…ATRKPRSLPR (61 aa)). ATP is bound at residue 83-88 (ASGKGT). The segment at 103-132 (SAGDLLRAEIAAGSENGKRAKEFMEKGQLV) is NMP. AMP-binding positions include R109, 130-132 (QLV), 159-162 (GYPR), and Q166. Residues R193, R197, and 206–207 (IY) contribute to the ATP site. The segment at 196-229 (GRRLDPVTGKIYHLKYSPPENEEIASRLTQRFDD) is LID. Residues R226 and R237 each coordinate AMP.

It belongs to the adenylate kinase family.

Its subcellular location is the plastid. The protein localises to the chloroplast. The catalysed reaction is AMP + ATP = 2 ADP. Catalyzes the reversible transfer of the terminal phosphate group between ATP and AMP. Plays an important role in cellular energy homeostasis and in adenine nucleotide metabolism. The protein is Probable adenylate kinase 2, chloroplastic of Oryza sativa subsp. japonica (Rice).